A 261-amino-acid chain; its full sequence is uncharacterized protein (261 aa).

ATP is bound at residue Gly-41–Ser-48.

This sequence belongs to the IIV-6 075L family.

This is an uncharacterized protein from Invertebrate iridescent virus 3 (IIV-3).